A 359-amino-acid polypeptide reads, in one-letter code: G-protein coupled receptor 15 (359 aa).

Topologically, residues 1 to 33 (MDPEETSVYLDYYYATSPNPDIRETHSHVPYTS) are extracellular. The helical transmembrane segment at 34 to 54 (VFLPVFYTAVFLTGVLGNLVL) threads the bilayer. The Cytoplasmic segment spans residues 55-69 (MGALHFKPGSRRLID). The chain crosses the membrane as a helical span at residues 70–90 (IFIINLAASDFIFLVTLPLWV). The Extracellular portion of the chain corresponds to 91-120 (DKEASLGLWRTGSFLCKGSSYMISVNMHCS). A helical membrane pass occupies residues 121 to 141 (VFLLTCMSVDRYLAIVCPVVS). The Cytoplasmic segment spans residues 142-149 (RKFRRTDC). Residues 150 to 170 (AYVVCASIWFISCLLGLPTLL) form a helical membrane-spanning segment. Over 171 to 192 (SRELTLIDDKPYCAEKKATPLK) the chain is Extracellular. Residues 193–213 (LIWSLVALIFTFFVPLLNIVT) form a helical membrane-spanning segment. Over 214–239 (CYCCIARKLCAHYQQSGRHNKKLKKS) the chain is Cytoplasmic. A helical transmembrane segment spans residues 240–260 (IKIILIVVAAFLVSWLPFNTF). Residues 261–283 (KLLAIVSGLQERYFPSAMLQLGM) are Extracellular-facing. The chain crosses the membrane as a helical span at residues 284–304 (EVSGPLAFANSCVNPFIYYIF). Residues 305–359 (DSYIRRAIVHCLCPCLKNYDFGSSTETSDSHLTKALSTFIHAEDFTRRRKRSVSL) lie on the Cytoplasmic side of the membrane. Ser358 carries the phosphoserine modification.

Belongs to the G-protein coupled receptor 1 family. In terms of assembly, interacts with adapter YWHAE; this interaction promotes ER-to-Golgi transport of GPR15. Post-translationally, phosphorylation is necessary for YWHAE binding and efficient surface expression. In terms of processing, O-glycosylated. Sialylated O-glycans in the N-terminal tail inhibits binding of GPR15LG. Sulfation is required for efficient binding of GPR15LG.

The protein resides in the cell membrane. G protein-coupled receptor that plays an important role in immune homeostasis. Acts via its natural ligand GPR15LG, a chemokine-like polypeptide strongly expressed in gastrointestinal tissues. GPR15-GPR15LG signaling axis regulates intestinal homeostasis and inflammation through the migration of immune cells. Controls thereby the specific homing of T-cells, particularly FOXP3+ regulatory T-cells (Tregs), to the large intestine lamina propria. Also required for skin localization of thymus-derived dendritic epidermal T-cells. Plays an important role in mediating cytoprotective function as well as angiogenesis of thrombomodulin. Mechanistically, preferentially signals through the Gi/o pathway to inhibit adenylate cyclase activity and activate a phosphatidylinositol-calcium second messenger system that regulates the release of Ca(2+) ions from intracellular stores. In Macaca fascicularis (Crab-eating macaque), this protein is G-protein coupled receptor 15 (GPR15).